Consider the following 157-residue polypeptide: Ribosomal RNA large subunit methyltransferase H (157 aa).

Residues Leu73, Gly105, and 124 to 129 (LSKMTF) contribute to the S-adenosyl-L-methionine site.

Belongs to the RNA methyltransferase RlmH family. In terms of assembly, homodimer.

It localises to the cytoplasm. It carries out the reaction pseudouridine(1915) in 23S rRNA + S-adenosyl-L-methionine = N(3)-methylpseudouridine(1915) in 23S rRNA + S-adenosyl-L-homocysteine + H(+). Functionally, specifically methylates the pseudouridine at position 1915 (m3Psi1915) in 23S rRNA. This Parabacteroides distasonis (strain ATCC 8503 / DSM 20701 / CIP 104284 / JCM 5825 / NCTC 11152) protein is Ribosomal RNA large subunit methyltransferase H.